Here is a 118-residue protein sequence, read N- to C-terminus: Fluoride-specific ion channel FluC 1 (118 aa).

Helical transmembrane passes span 5–25 and 47–67; these read FLLVGFGAALGAMLRYGISVL and FLLGFLVSSALGPVWQLFLGT. Residues G71 and T74 each coordinate Na(+). The helical transmembrane segment at 98–118 threads the bilayer; it reads YLGFTYVFGLIAAFLGMMLGV.

The protein belongs to the fluoride channel Fluc/FEX (TC 1.A.43) family.

The protein resides in the cell membrane. The enzyme catalyses fluoride(in) = fluoride(out). Its activity is regulated as follows. Na(+) is not transported, but it plays an essential structural role and its presence is essential for fluoride channel function. Its function is as follows. Fluoride-specific ion channel. Important for reducing fluoride concentration in the cell, thus reducing its toxicity. The polypeptide is Fluoride-specific ion channel FluC 1 (Listeria monocytogenes serovar 1/2a (strain ATCC BAA-679 / EGD-e)).